A 545-amino-acid polypeptide reads, in one-letter code: Chaperonin GroEL 2 (545 aa).

Residues 29–32 (TLGP), 86–90 (DGTTT), Gly413, 479–481 (NAA), and Asp495 each bind ATP.

It belongs to the chaperonin (HSP60) family. Forms a cylinder of 14 subunits composed of two heptameric rings stacked back-to-back. Interacts with the co-chaperonin GroES.

Its subcellular location is the cytoplasm. It catalyses the reaction ATP + H2O + a folded polypeptide = ADP + phosphate + an unfolded polypeptide.. Its function is as follows. Together with its co-chaperonin GroES, plays an essential role in assisting protein folding. The GroEL-GroES system forms a nano-cage that allows encapsulation of the non-native substrate proteins and provides a physical environment optimized to promote and accelerate protein folding. The sequence is that of Chaperonin GroEL 2 from Prochlorococcus marinus (strain MIT 9312).